A 237-amino-acid chain; its full sequence is MKITWLGHAAFRVETAKAVILIDPFLNGNPGAKGIDFKEATRGVTHIALTHGHGDHVGDTVAIAREHGATVIANADLASWLGSQGVEKLDPGNTGGTLAHEGFTITFVNALHSSAMLTENGVSQALGNPNGLVFHFEDSPTLYHMGDTDIFSDMAFINELHQPEIGIVPIGDRFTMGGAVAALACQRYFNFNSVLPCHYASFPIIDRTADKFIAGMADHPATKVLADPAGTVHSFQA.

Belongs to the UPF0173 family.

The chain is UPF0173 metal-dependent hydrolase BOV_A0561 from Brucella ovis (strain ATCC 25840 / 63/290 / NCTC 10512).